Here is a 150-residue protein sequence, read N- to C-terminus: Small ribosomal subunit protein uS11y (150 aa).

Residues 129 to 150 (EDVTPVPTDSTRRKGGRRGRRL) form a disordered region. Positions 141-150 (RKGGRRGRRL) are enriched in basic residues.

Belongs to the universal ribosomal protein uS11 family.

The chain is Small ribosomal subunit protein uS11y from Zea mays (Maize).